A 68-amino-acid chain; its full sequence is Conotoxin Mr3.3 (68 aa).

An N-terminal signal peptide occupies residues 1 to 19; sequence MSRLGVLLTICLLLFPLTA. The propeptide occupies 20-51; sequence VPLDGDQPADRPAERLQDDISSEHHPHFDSGR. The disordered stretch occupies residues 22–46; the sequence is LDGDQPADRPAERLQDDISSEHHPH. A compositionally biased stretch (basic and acidic residues) spans 27–46; that stretch reads PADRPAERLQDDISSEHHPH. 3 cysteine pairs are disulfide-bonded: cysteine 53–cysteine 67, cysteine 54–cysteine 63, and cysteine 59–cysteine 66. Proline 65 is modified (4-hydroxyproline).

Belongs to the conotoxin M superfamily. In terms of tissue distribution, expressed by the venom duct.

The protein resides in the secreted. This is Conotoxin Mr3.3 from Conus marmoreus (Marble cone).